Here is a 320-residue protein sequence, read N- to C-terminus: D-amino-acid oxidase (320 aa).

FAD contacts are provided by alanine 13, glycine 14, valine 15, threonine 42, threonine 43, serine 44, glycine 48, and alanine 49. D-proline-binding residues include tyrosine 220 and arginine 274. Tyrosine 220 and arginine 274 together coordinate D-serine. Arginine 274, glycine 299, glycine 300, glycine 302, and threonine 304 together coordinate FAD. Residue glycine 300 participates in D-proline binding. A D-serine-binding site is contributed by glycine 300.

It belongs to the DAMOX/DASOX family. It depends on FAD as a cofactor.

It is found in the cytoplasm. The protein localises to the secreted. It localises to the cell wall. It catalyses the reaction a D-alpha-amino acid + O2 + H2O = a 2-oxocarboxylate + H2O2 + NH4(+). Functionally, catalyzes the oxidative deamination of D-amino acids with broad substrate specificity. Enables the organism to utilize D-amino acids as a source of nutrients. Enables the organism to utilize glycine as a carbon source. The chain is D-amino-acid oxidase from Mycobacterium tuberculosis (strain ATCC 25177 / H37Ra).